Consider the following 500-residue polypeptide: Lysine--tRNA ligase (500 aa).

Residues Glu410 and Glu417 each coordinate Mg(2+).

It belongs to the class-II aminoacyl-tRNA synthetase family. Homodimer. Mg(2+) is required as a cofactor.

The protein localises to the cytoplasm. The catalysed reaction is tRNA(Lys) + L-lysine + ATP = L-lysyl-tRNA(Lys) + AMP + diphosphate. The sequence is that of Lysine--tRNA ligase from Shewanella denitrificans (strain OS217 / ATCC BAA-1090 / DSM 15013).